Here is a 117-residue protein sequence, read N- to C-terminus: Large ribosomal subunit protein bL17 (117 aa).

Belongs to the bacterial ribosomal protein bL17 family. In terms of assembly, part of the 50S ribosomal subunit. Contacts protein L32.

This chain is Large ribosomal subunit protein bL17, found in Campylobacter lari (strain RM2100 / D67 / ATCC BAA-1060).